A 132-amino-acid chain; its full sequence is Large ribosomal subunit protein bL17 (132 aa).

It belongs to the bacterial ribosomal protein bL17 family. In terms of assembly, part of the 50S ribosomal subunit. Contacts protein L32.

This is Large ribosomal subunit protein bL17 from Variovorax paradoxus (strain S110).